The primary structure comprises 223 residues: Putative germin-like protein 2-2 (223 aa).

The first 28 residues, 1-28 (MAAVGACFLQQLAVVALLALWCSHGAIA), serve as a signal peptide directing secretion. A disulfide bridge links cysteine 38 with cysteine 53. The Cupin type-1 domain maps to 67 to 217 (SGLHMAGNTT…AFQVDKNIID (151 aa)). N-linked (GlcNAc...) asparagine glycans are attached at residues asparagine 74 and asparagine 82. Residues histidine 115, histidine 117, glutamate 122, and histidine 163 each coordinate Mn(2+). N-linked (GlcNAc...) asparagine glycosylation occurs at asparagine 168.

It belongs to the germin family. Oligomer (believed to be a pentamer but probably hexamer).

It localises to the secreted. The protein resides in the extracellular space. Its subcellular location is the apoplast. May play a role in plant defense. Probably has no oxalate oxidase activity even if the active site is conserved. In Oryza sativa subsp. japonica (Rice), this protein is Putative germin-like protein 2-2.